The chain runs to 115 residues: U3-lycotoxin-Ls1i (115 aa).

The signal sequence occupies residues 1–20; that stretch reads MKFVLLFGVFLVTLFSYSSA. Residues 21-44 constitute a propeptide that is removed on maturation; it reads EMLDDFDQADEDELLSLIEKEEAR. Intrachain disulfides connect cysteine 48-cysteine 63, cysteine 55-cysteine 72, cysteine 62-cysteine 87, and cysteine 74-cysteine 85.

This sequence belongs to the neurotoxin 19 (CSTX) family. 01 subfamily. As to expression, expressed by the venom gland.

The protein localises to the secreted. The sequence is that of U3-lycotoxin-Ls1i from Lycosa singoriensis (Wolf spider).